Consider the following 122-residue polypeptide: uncharacterized protein (122 aa).

The N-terminal stretch at 1–28 (MVPGPPESVVRFFLWFCFLLPPTRKASC) is a signal peptide. A glycan (N-linked (GlcNAc...) asparagine) is linked at Asn-49.

Its subcellular location is the secreted. This is an uncharacterized protein from Homo sapiens (Human).